A 64-amino-acid polypeptide reads, in one-letter code: Phylloxin-S1 (64 aa).

The N-terminal stretch at 1-22 (MVFLKKSLLLVLFVGLVSLSIC) is a signal peptide. Residues 23–44 (EENKREEHEEVEENAEKAEEKR) constitute a propeptide that is removed on maturation. Q63 is modified (glutamine amide).

In terms of tissue distribution, expressed by the skin glands.

The protein localises to the secreted. Functionally, antimicrobial peptide against both Gram-positive and Gram-negative bacteria. The polypeptide is Phylloxin-S1 (Phyllomedusa sauvagei (Sauvage's leaf frog)).